Here is a 218-residue protein sequence, read N- to C-terminus: Thiamine-phosphate synthase (218 aa).

Residues 36-40 and aspartate 70 contribute to the 4-amino-2-methyl-5-(diphosphooxymethyl)pyrimidine site; that span reads QVRSK. Mg(2+) is bound by residues aspartate 71 and aspartate 94. Residue threonine 113 participates in 4-amino-2-methyl-5-(diphosphooxymethyl)pyrimidine binding. 141-143 is a 2-[(2R,5Z)-2-carboxy-4-methylthiazol-5(2H)-ylidene]ethyl phosphate binding site; it reads TPT. Lysine 144 is a binding site for 4-amino-2-methyl-5-(diphosphooxymethyl)pyrimidine.

Belongs to the thiamine-phosphate synthase family. Requires Mg(2+) as cofactor.

It catalyses the reaction 2-[(2R,5Z)-2-carboxy-4-methylthiazol-5(2H)-ylidene]ethyl phosphate + 4-amino-2-methyl-5-(diphosphooxymethyl)pyrimidine + 2 H(+) = thiamine phosphate + CO2 + diphosphate. The catalysed reaction is 2-(2-carboxy-4-methylthiazol-5-yl)ethyl phosphate + 4-amino-2-methyl-5-(diphosphooxymethyl)pyrimidine + 2 H(+) = thiamine phosphate + CO2 + diphosphate. The enzyme catalyses 4-methyl-5-(2-phosphooxyethyl)-thiazole + 4-amino-2-methyl-5-(diphosphooxymethyl)pyrimidine + H(+) = thiamine phosphate + diphosphate. It functions in the pathway cofactor biosynthesis; thiamine diphosphate biosynthesis; thiamine phosphate from 4-amino-2-methyl-5-diphosphomethylpyrimidine and 4-methyl-5-(2-phosphoethyl)-thiazole: step 1/1. Condenses 4-methyl-5-(beta-hydroxyethyl)thiazole monophosphate (THZ-P) and 2-methyl-4-amino-5-hydroxymethyl pyrimidine pyrophosphate (HMP-PP) to form thiamine monophosphate (TMP). The sequence is that of Thiamine-phosphate synthase from Corynebacterium jeikeium (strain K411).